The following is a 912-amino-acid chain: Transferrin-binding protein A (912 aa).

An N-terminal signal peptide occupies residues 1 to 23; it reads MTKKPYFRLSIISCLLISCYVKA. The TonB box motif lies at 50 to 57; it reads ETISVTAE. Residues 63–188 enclose the TBDR plug domain; the sequence is KDNEVTGLGK…LAGSVTFQSK (126 aa). The TBDR beta-barrel domain maps to 199–912; that stretch reads SWGIQTKNAY…NYTLTLEMKF (714 aa). Residues 895-912 carry the TonB C-terminal box motif; sequence TRYAASGRNYTLTLEMKF.

It belongs to the TonB-dependent receptor family.

It localises to the cell outer membrane. Haemophilus acquires iron by extracting it from serum transferrin (TF) in its human host. Acts as a transferrin receptor and is required for transferrin utilization. The polypeptide is Transferrin-binding protein A (Haemophilus influenzae (strain ATCC 51907 / DSM 11121 / KW20 / Rd)).